The following is a 114-amino-acid chain: Histone H3-7 (114 aa).

Residues 1 to 17 are compositionally biased toward basic residues; it reads NTGGKAPRKHIAHKQAK. The segment at 1-32 is disordered; the sequence is NTGGKAPRKHIAHKQAKKSSAAAATGGVKKPH. A compositionally biased stretch (low complexity) spans 18–28; sequence KSSAAAATGGV.

It belongs to the histone H3 family. In terms of assembly, the nucleosome is a histone octamer containing two molecules each of H2A, H2B, H3 and H4 assembled in one H3-H4 heterotetramer and two H2A-H2B heterodimers. The octamer wraps approximately 147 bp of DNA.

It localises to the nucleus. It is found in the chromosome. Core component of nucleosome. Nucleosomes wrap and compact DNA into chromatin, limiting DNA accessibility to the cellular machineries which require DNA as a template. Histones thereby play a central role in transcription regulation, DNA repair, DNA replication and chromosomal stability. DNA accessibility is regulated via a complex set of post-translational modifications of histones, also called histone code, and nucleosome remodeling. This Stylonychia lemnae (Ciliate) protein is Histone H3-7 (H3-7).